The following is a 721-amino-acid chain: Protein quick-to-court (721 aa).

5 disordered regions span residues 1 to 42, 143 to 210, 360 to 379, 393 to 428, and 441 to 471; these read MMTS…RIPH, VGNS…ASVA, SSPEERSASSDAVTVREAEL, DEGNAKGSPRHLSRQQQQQANHSLQAMQMSAEMQSS, and SSVHSKDSQTQSEACGTATPDGEADVGCGAG. Residues 17–31 show a composition bias toward basic and acidic residues; that stretch reads QVQREKDNDSAEDSH. Residues 161 to 201 show a composition bias toward low complexity; the sequence is NGGSDISSSGTSSSSSNNKESSPRTTRTPRTPQTPQTPQTP. The span at 362 to 379 shows a compositional bias: basic and acidic residues; that stretch reads PEERSASSDAVTVREAEL. Over residues 406–420 the composition is skewed to low complexity; sequence RQQQQQANHSLQAMQ. A compositionally biased stretch (polar residues) spans 441 to 454; it reads SSVHSKDSQTQSEA. A coiled-coil region spans residues 511–569; that stretch reads KRSHNDKVEALLQKLAECNTRYSDMVPDYEQAKQRIRELEKQLEDLQRKLIEHEEKQNK. Residues 668-716 enclose the GRIP domain; that stretch reads HVDPEVTLQFLKSAIFYFLTDKENSQGHLQAIESILEFTDAEKQKISAA.

Expressed in the third antennal segment and the maxillary palp, with increased expression near the cuticle of both olfactory organs. Also detected in the second antenna segment. In the brain, expressed in the central nervous system, with high levels of expression in the visual system including the retina and optic lobe, and uniform expression in the cortex. Detected in the thorax and abdomen, with increased expression in the ventral ganglion. In males, detected in the reproductive tract including the ejaculatory bulb and testis.

In adult males, modulates sexual behavior by playing a role in sex discrimination and maintaining normal levels of sexual activity towards both males and females. The sequence is that of Protein quick-to-court from Drosophila melanogaster (Fruit fly).